The primary structure comprises 185 residues: UPF0669 protein C6orf120 homolog (185 aa).

The first 23 residues, 1 to 23, serve as a signal peptide directing secretion; sequence MATPWRRALLMILASQVVTLVKC. N-linked (GlcNAc...) asparagine glycosylation is present at Asn47.

It belongs to the UPF0669 family.

The protein resides in the secreted. May be involved in induction of apoptosis in CD4(+) T-cells, but not CD8(+) T-cells or hepatocytes. The polypeptide is UPF0669 protein C6orf120 homolog (Mus musculus (Mouse)).